Reading from the N-terminus, the 400-residue chain is Subtilisin-like protease 7 (400 aa).

The N-terminal stretch at methionine 1 to glycine 20 is a signal peptide. A propeptide spanning residues alanine 21 to asparagine 119 is cleaved from the precursor. One can recognise an Inhibitor I9 domain in the interval lysine 36–isoleucine 118. The Peptidase S8 domain occupies serine 129–methionine 400. Active-site charge relay system residues include aspartate 161 and histidine 192. N-linked (GlcNAc...) asparagine glycans are attached at residues asparagine 222 and asparagine 252. The Charge relay system role is filled by serine 346. Asparagine 396 is a glycosylation site (N-linked (GlcNAc...) asparagine).

It belongs to the peptidase S8 family.

Its subcellular location is the secreted. In terms of biological role, secreted subtilisin-like serine protease with keratinolytic activity that contributes to pathogenicity. In Trichophyton soudanense, this protein is Subtilisin-like protease 7 (SUB7).